Reading from the N-terminus, the 587-residue chain is 2-succinyl-5-enolpyruvyl-6-hydroxy-3-cyclohexene-1-carboxylate synthase (587 aa).

The protein belongs to the TPP enzyme family. MenD subfamily. In terms of assembly, homodimer. Mg(2+) is required as a cofactor. The cofactor is Mn(2+). Thiamine diphosphate serves as cofactor.

It catalyses the reaction isochorismate + 2-oxoglutarate + H(+) = 5-enolpyruvoyl-6-hydroxy-2-succinyl-cyclohex-3-ene-1-carboxylate + CO2. It functions in the pathway quinol/quinone metabolism; 1,4-dihydroxy-2-naphthoate biosynthesis; 1,4-dihydroxy-2-naphthoate from chorismate: step 2/7. It participates in cofactor biosynthesis; phylloquinone biosynthesis. Catalyzes the thiamine diphosphate-dependent decarboxylation of 2-oxoglutarate and the subsequent addition of the resulting succinic semialdehyde-thiamine pyrophosphate anion to isochorismate to yield 2-succinyl-5-enolpyruvyl-6-hydroxy-3-cyclohexene-1-carboxylate (SEPHCHC). The chain is 2-succinyl-5-enolpyruvyl-6-hydroxy-3-cyclohexene-1-carboxylate synthase from Prochlorococcus marinus (strain MIT 9215).